Consider the following 342-residue polypeptide: Heparan sulfate glucosamine 3-O-sulfotransferase 6 (342 aa).

Residues 1-31 (MAGSGGLGGGAGDLQGAGTGQGTALRALRAP) lie on the Cytoplasmic side of the membrane. The chain crosses the membrane as a helical; Signal-anchor for type II membrane protein span at residues 32 to 49 (LALVVLLLSAYCLFALPG). The Lumenal segment spans residues 50–342 (RCPPAARAPA…QMTGQDFGWD (293 aa)). The tract at residues 56 to 75 (RAPAPVPAPAEPPHTSLRLR) is disordered. Position 100–104 (100–104 (KGGTR)) interacts with 3'-phosphoadenylyl sulfate. Substrate is bound by residues 122 to 128 (EPHFFDR) and 153 to 156 (KTPS). Residues Arg-181 and Ser-189 each coordinate 3'-phosphoadenylyl sulfate. Residue 220–221 (WS) coordinates substrate. Asn-281 carries an N-linked (GlcNAc...) asparagine glycan. An intrachain disulfide couples Cys-288 to Cys-300. 305 to 309 (KGRPH) contacts 3'-phosphoadenylyl sulfate.

The protein belongs to the sulfotransferase 1 family. As to expression, expressed in liver and kidney, followed by heart, brain, lung and testis.

It localises to the golgi apparatus membrane. It carries out the reaction alpha-D-glucosaminyl-[heparan sulfate](n) + 3'-phosphoadenylyl sulfate = 3-sulfo-alpha-D-glucosaminyl-[heparan sulfate](n) + adenosine 3',5'-bisphosphate + H(+). Its function is as follows. Sulfotransferase that utilizes 3'-phospho-5'-adenylyl sulfate (PAPS) to catalyze the transfer of a sulfo group to heparan sulfate. Unlike 3-OST-1, does not convert non-anticoagulant heparan sulfate to anticoagulant heparan sulfate. This Mus musculus (Mouse) protein is Heparan sulfate glucosamine 3-O-sulfotransferase 6 (Hs3st6).